Here is a 486-residue protein sequence, read N- to C-terminus: MDTKNTEIKGKERYKAGVLKYAQMGYWDGDYQPKDTDVLALFRITPQEGVDPIEAAAAVAGESSTATWTVVWTDRLTACDSYRAKAYKVEPVPGTPGQYFCYVAYDLILFEEGSIANLTASIIGNVFSFKPLKAARLEDMRFPVAYVKTYKGPPTGIIVERERLDKFGKPLLGATTKPKLGLSGKNYGRVVYEGLKGGLDFMKDDENINSQPFMHWRDRFLYVMEAVNLASAQTGEVKGHYLNITAGTMEEMYRRAEFAKSLGSVIVMVDLIIGYTAIQSISEWCRQNDMILHMHRAGHGTYTRQKNHGISFRVIAKWLRLAGVDHLHCGTAVGKLEGDPPTVQGYYNVCREPFNTVDLQRGLFFEQDWADLKKVMPVASGGIHAGQMHQLLSLFGDDVVLQFGGGTIGHPMGIQAGATANRVALEAMVLARNEGRNIDVEGPEILRAAAKWCKPLEAALDTWGNITFNYTSTDTSDFVPTPSVSM.

Positions 125 and 175 each coordinate substrate. The Proton acceptor role is filled by Lys177. Lys179 contacts substrate. Lys203, Asp205, and Glu206 together coordinate Mg(2+). The residue at position 203 (Lys203) is an N6-carboxylysine. The active-site Proton acceptor is the His295. Substrate-binding residues include Arg296, His328, and Ser380.

The protein belongs to the RuBisCO large chain family. Type I subfamily. In terms of assembly, heterohexadecamer of 8 large chains and 8 small chains. Requires Mg(2+) as cofactor.

The enzyme catalyses 2 (2R)-3-phosphoglycerate + 2 H(+) = D-ribulose 1,5-bisphosphate + CO2 + H2O. It catalyses the reaction D-ribulose 1,5-bisphosphate + O2 = 2-phosphoglycolate + (2R)-3-phosphoglycerate + 2 H(+). RuBisCO catalyzes two reactions: the carboxylation of D-ribulose 1,5-bisphosphate, the primary event in carbon dioxide fixation, as well as the oxidative fragmentation of the pentose substrate. Both reactions occur simultaneously and in competition at the same active site. The protein is Ribulose bisphosphate carboxylase large chain 1 of Cereibacter sphaeroides (strain ATCC 17025 / ATH 2.4.3) (Rhodobacter sphaeroides).